A 651-amino-acid chain; its full sequence is Acetyl-coenzyme A synthetase 1 (651 aa).

CoA is bound by residues 191-194, Thr-311, and Asn-335; that span reads RGGK. ATP contacts are provided by residues 387–389, 411–416, Asp-500, and Arg-515; these read GEP and DTWWQT. Ser-523 contacts CoA. ATP is bound at residue Arg-526. Mg(2+)-binding residues include Val-537, His-539, and Val-542. Residue Arg-584 participates in CoA binding. Position 609 is an N6-acetyllysine (Lys-609).

Belongs to the ATP-dependent AMP-binding enzyme family. Requires Mg(2+) as cofactor. Post-translationally, acetylated. Deacetylation by the SIR2-homolog deacetylase activates the enzyme.

It carries out the reaction acetate + ATP + CoA = acetyl-CoA + AMP + diphosphate. In terms of biological role, catalyzes the conversion of acetate into acetyl-CoA (AcCoA), an essential intermediate at the junction of anabolic and catabolic pathways. AcsA undergoes a two-step reaction. In the first half reaction, AcsA combines acetate with ATP to form acetyl-adenylate (AcAMP) intermediate. In the second half reaction, it can then transfer the acetyl group from AcAMP to the sulfhydryl group of CoA, forming the product AcCoA. The polypeptide is Acetyl-coenzyme A synthetase 1 (Pseudomonas aeruginosa (strain ATCC 15692 / DSM 22644 / CIP 104116 / JCM 14847 / LMG 12228 / 1C / PRS 101 / PAO1)).